The following is a 270-amino-acid chain: Protein N-terminal and lysine N-methyltransferase EFM7 (270 aa).

The tract at residues 1–45 (MSDIESLNGGDLFAEPSDFYKPPPEPHFATYTRDDVPESSTSQQK) is disordered. S-adenosyl-L-methionine contacts are provided by residues Trp63, 89–91 (GAA), Asp111, Trp158, and Ser182.

Belongs to the class I-like SAM-binding methyltransferase superfamily. EFM7 family.

It is found in the cytoplasm. In terms of biological role, S-adenosyl-L-methionine-dependent protein methyltransferase that trimethylates the N-terminal glycine 'Gly-2' of elongation factor 1-alpha, before also catalyzing the mono- and dimethylation of 'Lys-3'. The polypeptide is Protein N-terminal and lysine N-methyltransferase EFM7 (Kluyveromyces lactis (strain ATCC 8585 / CBS 2359 / DSM 70799 / NBRC 1267 / NRRL Y-1140 / WM37) (Yeast)).